The following is a 289-amino-acid chain: Fatty acid elongase 1 (289 aa).

Transmembrane regions (helical) follow at residues 22–42 (VVGYISGIYLAFVFTGPKLFA), 72–92 (AMVLWNLSLSVFSIFGTSTVT), 123–143 (FWIGVFALSKIPELMDTIFLV), 152–172 (FLHWYHHVTVLLFSWHTYCVG), 177–197 (IWVAAMNYSVHSIMYLYFAIA), 208–228 (WAPYITILQILQMVMGCFVTL), and 251–271 (LLMYASYLYLFSEMFVKAHVL). Residues 154 to 158 (HWYHH) carry the HxxHH motif motif. The Nucleophile role is filled by His-157. N-linked (GlcNAc...) asparagine glycosylation occurs at Asn-282.

The protein belongs to the ELO family.

It localises to the endoplasmic reticulum membrane. It catalyses the reaction an acyl-CoA + malonyl-CoA + H(+) = a 3-oxoacyl-CoA + CO2 + CoA. It participates in lipid metabolism; fatty acid biosynthesis. Its function is as follows. Involved in the synthesis of fatty acids. Elongates C4 fatty acids. Required for the normal mitochondrial function, energy metabolism and growth of epimastigotes. The protein is Fatty acid elongase 1 of Trypanosoma cruzi (strain CL Brener).